The chain runs to 319 residues: Plasmodesmata-located protein 4 (319 aa).

An N-terminal signal peptide occupies residues 1-26; that stretch reads MVVHLISLLTQTLALIILSLPSIINT. Topologically, residues 27 to 288 are extracellular; sequence SQLDYDTLVF…EGSKVNTGKS (262 aa). Intrachain disulfides connect C39–C127, C103–C112, C115–C140, C177–C247, C223–C232, and C235–C260. Gnk2-homologous domains lie at 45 to 149 and 170 to 269; these read NILQ…FERI and HGLI…YHPH. Residues 289 to 309 traverse the membrane as a helical segment; sequence LAIVVGGVAALVFVAIFFMFL. The segment at 289-309 is necessary and sufficient for plasmodesmal targeting; that stretch reads LAIVVGGVAALVFVAIFFMFL. Residues 310–319 lie on the Cytoplasmic side of the membrane; sequence KSLRKKGDDC.

The protein belongs to the cysteine-rich repeat secretory protein family. Plasmodesmata-located proteins (PDLD) subfamily. (Microbial infection) Interacts with Grapevine fanleaf virus (GFLV) 2B-MP. In terms of tissue distribution, highly expressed in seeds and roots.

The protein localises to the cell membrane. It localises to the cell junction. Its subcellular location is the plasmodesma. Functionally, modulates cell-to-cell trafficking. The chain is Plasmodesmata-located protein 4 from Arabidopsis thaliana (Mouse-ear cress).